We begin with the raw amino-acid sequence, 1364 residues long: Trifunctional purine biosynthetic protein adenosine-3 (1364 aa).

Positions lysine 114–serine 321 constitute an ATP-grasp domain. Residue isoleucine 140–serine 202 coordinates ATP. Residues glutamate 291 and asparagine 293 each contribute to the Mn(2+) site. The segment at alanine 435–proline 1154 is AIRS. The GART stretch occupies residues arginine 1155–glutamine 1364. Glycine 1166–asparagine 1168 is a N(1)-(5-phospho-beta-D-ribosyl)glycinamide binding site. (6R)-10-formyltetrahydrofolate-binding positions include arginine 1221, methionine 1246–leucine 1249, and asparagine 1263. Histidine 1265 functions as the Proton donor in the catalytic mechanism. (6R)-10-formyltetrahydrofolate is bound at residue aspartate 1297–aspartate 1301. Residue histidine 1327–glutamate 1330 coordinates N(1)-(5-phospho-beta-D-ribosyl)glycinamide.

In the N-terminal section; belongs to the GARS family. The protein in the central section; belongs to the AIR synthase family. It in the C-terminal section; belongs to the GART family.

It carries out the reaction 5-phospho-beta-D-ribosylamine + glycine + ATP = N(1)-(5-phospho-beta-D-ribosyl)glycinamide + ADP + phosphate + H(+). The catalysed reaction is 2-formamido-N(1)-(5-O-phospho-beta-D-ribosyl)acetamidine + ATP = 5-amino-1-(5-phospho-beta-D-ribosyl)imidazole + ADP + phosphate + H(+). The enzyme catalyses N(1)-(5-phospho-beta-D-ribosyl)glycinamide + (6R)-10-formyltetrahydrofolate = N(2)-formyl-N(1)-(5-phospho-beta-D-ribosyl)glycinamide + (6S)-5,6,7,8-tetrahydrofolate + H(+). Its pathway is purine metabolism; IMP biosynthesis via de novo pathway; 5-amino-1-(5-phospho-D-ribosyl)imidazole from N(2)-formyl-N(1)-(5-phospho-D-ribosyl)glycinamide: step 2/2. The protein operates within purine metabolism; IMP biosynthesis via de novo pathway; N(1)-(5-phospho-D-ribosyl)glycinamide from 5-phospho-alpha-D-ribose 1-diphosphate: step 2/2. It participates in purine metabolism; IMP biosynthesis via de novo pathway; N(2)-formyl-N(1)-(5-phospho-D-ribosyl)glycinamide from N(1)-(5-phospho-D-ribosyl)glycinamide (10-formyl THF route): step 1/1. Its function is as follows. Trifunctional enzyme required for de novo purine biosynthesis. This chain is Trifunctional purine biosynthetic protein adenosine-3 (ade3), found in Drosophila pseudoobscura pseudoobscura (Fruit fly).